The following is a 445-amino-acid chain: GTPase Der (445 aa).

2 EngA-type G domains span residues P3 to Q167 and I180 to M353. Residues G9–S16, D56–F60, N119–E122, G186–S193, D233–L237, and N298–D301 contribute to the GTP site. Residues A354–N438 enclose the KH-like domain.

This sequence belongs to the TRAFAC class TrmE-Era-EngA-EngB-Septin-like GTPase superfamily. EngA (Der) GTPase family. Associates with the 50S ribosomal subunit.

Functionally, GTPase that plays an essential role in the late steps of ribosome biogenesis. The sequence is that of GTPase Der from Burkholderia ambifaria (strain ATCC BAA-244 / DSM 16087 / CCUG 44356 / LMG 19182 / AMMD) (Burkholderia cepacia (strain AMMD)).